We begin with the raw amino-acid sequence, 341 residues long: Inositol monophosphatase 3 (341 aa).

Residues 11 to 31 (LGIAVFCLLGVGVIYHLYAGV) form a helical membrane-spanning segment. Mg(2+) contacts are provided by Glu117, Asp157, Leu159, Asp160, and Asp283. Glu117 is a substrate binding site. Substrate-binding positions include 159–162 (LDAT) and Asp283.

The protein belongs to the inositol monophosphatase superfamily. Mg(2+) is required as a cofactor.

It is found in the membrane. It carries out the reaction a myo-inositol phosphate + H2O = myo-inositol + phosphate. Its pathway is polyol metabolism; myo-inositol biosynthesis; myo-inositol from D-glucose 6-phosphate: step 2/2. The polypeptide is Inositol monophosphatase 3 (bpnt2) (Danio rerio (Zebrafish)).